A 156-amino-acid chain; its full sequence is Small ribosomal subunit protein uS7 (156 aa).

The protein belongs to the universal ribosomal protein uS7 family. Part of the 30S ribosomal subunit. Contacts proteins S9 and S11.

One of the primary rRNA binding proteins, it binds directly to 16S rRNA where it nucleates assembly of the head domain of the 30S subunit. Is located at the subunit interface close to the decoding center, probably blocks exit of the E-site tRNA. The sequence is that of Small ribosomal subunit protein uS7 from Bartonella henselae (strain ATCC 49882 / DSM 28221 / CCUG 30454 / Houston 1) (Rochalimaea henselae).